Consider the following 352-residue polypeptide: MKLSQFKFKLPEEKIALHPTKYRDESRLMVLHKRTGEIEHKMFKDILNYFDDKDVFVFNDTKVFPARLYGNKEKTGARIEVFLLRELNEELRLWDVLVDPARKIRIGNKLYFGDDDSMVAEVIDNTTSRGRTLRFLYDGPHDEFKKALYALGETPLPHTILNRPVEEEDAERFQSIFAKNEGAVTAPTASLHFSRELMKRMEIKGIDFAYITLHAGLGNFRDIDVEDLTKHKMDSEQMFVTEEAVKIVNRAKDLGKNVCAVGTTVMRAIESTVSTDGHLKEYEGWTNKFIFPPYDFTVANAMVSNFHMPLSTLLMIVAAFGGYDQVMDAYHIALKEGYRFGTYGDAMLILDK.

It belongs to the QueA family. As to quaternary structure, monomer.

It localises to the cytoplasm. The catalysed reaction is 7-aminomethyl-7-carbaguanosine(34) in tRNA + S-adenosyl-L-methionine = epoxyqueuosine(34) in tRNA + adenine + L-methionine + 2 H(+). Its pathway is tRNA modification; tRNA-queuosine biosynthesis. Transfers and isomerizes the ribose moiety from AdoMet to the 7-aminomethyl group of 7-deazaguanine (preQ1-tRNA) to give epoxyqueuosine (oQ-tRNA). The sequence is that of S-adenosylmethionine:tRNA ribosyltransferase-isomerase from Bacteroides fragilis (strain ATCC 25285 / DSM 2151 / CCUG 4856 / JCM 11019 / LMG 10263 / NCTC 9343 / Onslow / VPI 2553 / EN-2).